Consider the following 1841-residue polypeptide: Sodium channel protein type 4 subunit alpha (1841 aa).

Residues 1 to 131 (MASSSLPTLV…RVAIKVLIHA (131 aa)) lie on the Cytoplasmic side of the membrane. A compositionally biased stretch (basic and acidic residues) spans 32 to 60 (AMEEEARLQRNKQMEIEEPERKPRSDLEA). Residues 32–63 (AMEEEARLQRNKQMEIEEPERKPRSDLEAGKN) form a disordered region. An I repeat occupies 113–448 (MLSPFSIVRR…VVAMAYAEQN (336 aa)). Residues 132-150 (LFSMFIMITILTNCVFMTM) form a helical membrane-spanning segment. Residues 151 to 157 (SNPPSWS) lie on the Extracellular side of the membrane. Residues 158-178 (KDVEYTFTGIYTFESLIKMLA) traverse the membrane as a helical segment. Residues 179–192 (RGFCIDDFTFLRDP) lie on the Cytoplasmic side of the membrane. A helical membrane pass occupies residues 193-210 (WNWLDFSVITMAYVTEFV). At 211–216 (DLGNIS) the chain is on the extracellular side. N-linked (GlcNAc...) asparagine glycosylation is present at Asn-214. The helical transmembrane segment at 217–233 (ALRTFRVLRALKTITVI) threads the bilayer. Residues 234 to 252 (PGLKTIVGALIQSVKKLSD) are Cytoplasmic-facing. The chain crosses the membrane as a helical span at residues 253–272 (VMILTVFCLSVFALVGLQLF). Residues 273–385 (MGNLRQKCVR…PNYGYTSYDT (113 aa)) lie on the Extracellular side of the membrane. Cys-280 and Cys-354 form a disulfide bridge. Residues Asn-288, Asn-291, Asn-297, Asn-303, Asn-315, Asn-327, and Asn-356 are each glycosylated (N-linked (GlcNAc...) asparagine). Residues Cys-363 and Cys-369 are joined by a disulfide bond. Positions 386–410 (FSWAFLALFRLMTQDYWENLFQLTL) form an intramembrane region, pore-forming. Residues 411–417 (RAAGKTY) lie on the Extracellular side of the membrane. Residues 418–438 (MIFFVVIIFLGSFYLINLILA) traverse the membrane as a helical segment. The Cytoplasmic segment spans residues 439 to 572 (VVAMAYAEQN…HIILLIVMDP (134 aa)). The segment at 484 to 522 (ALEGGEEADGDPTHSKDCNGSLDTSGEKGPPRPSCSAES) is disordered. The II repeat unit spans residues 554–826 (CCAPWVKFKH…QIAIGRIKWG (273 aa)). Residues 573 to 591 (FVDLGITICIVLNTLFMAM) form a helical membrane-spanning segment. Over 592–602 (EHYPMTEHFDN) the chain is Extracellular. Residues 603 to 622 (VLSVGNLVFTGIFTAEMVLK) traverse the membrane as a helical segment. Over 623-636 (LIAMDPYEYFQQGW) the chain is Cytoplasmic. A helical transmembrane segment spans residues 637-656 (NIFDSFIVTLSLVELGLANV). The Extracellular portion of the chain corresponds to 657–658 (QG). The helical transmembrane segment at 659 to 676 (LSVLRSFRLLRVFKLAKS) threads the bilayer. The Cytoplasmic segment spans residues 677–692 (WPTLNMLIKIIGNSVG). A helical transmembrane segment spans residues 693–711 (ALGNLTLVLAIIVFIFAVV). Over 712–740 (GMQLFGKSYKECVCKIASDCSLPRWHMHD) the chain is Extracellular. Cys-725 and Cys-731 form a disulfide bridge. Residues 741-761 (FFHSFLIVFRILCGEWIETMW) constitute an intramembrane region (pore-forming). Residues 762–772 (DCMEVAGQAMC) lie on the Extracellular side of the membrane. Cys-763 and Cys-772 form a disulfide bridge. Residues 773-791 (LTVFLMVMVIGNLVVLNLF) traverse the membrane as a helical segment. Over 792 to 1026 (LALLLSSFSA…ACFKIVEHNW (235 aa)) the chain is Cytoplasmic. Disordered stretches follow at residues 854 to 896 (EPGG…LTDG) and 925 to 983 (SDLE…EGEL). A compositionally biased stretch (basic and acidic residues) spans 867-887 (EDEKKEPPPEDGNKELKDNHI). Acidic residues-rich tracts occupy residues 925 to 941 (SDLE…FSEP) and 969 to 983 (EDPE…EGEL). The III repeat unit spans residues 1007–1320 (RGKMWWTLRR…KKYYNAMKKL (314 aa)). The helical transmembrane segment at 1027-1044 (FETFIVFMILLSSGALAF) threads the bilayer. The Extracellular portion of the chain corresponds to 1045 to 1057 (EDIYIEQRRVIRT). The helical transmembrane segment at 1058–1076 (ILEYADKVFTYIFILEMLL) threads the bilayer. Residues 1077 to 1090 (KWVAYGFKVYFTNA) lie on the Cytoplasmic side of the membrane. A helical transmembrane segment spans residues 1091–1109 (WCWLDFLIVDVSIISLVAN). The Extracellular portion of the chain corresponds to 1110 to 1117 (WLGYSELG). A helical transmembrane segment spans residues 1118–1136 (PIKSLRTLRALRPLRALSR). The Cytoplasmic portion of the chain corresponds to 1137 to 1153 (FEGMRVVVNALLGAIPS). Residues 1154-1173 (IMNVLLVCLIFWLIFSIMGV) traverse the membrane as a helical segment. At 1174-1224 (NLFAGKFYYCINTTTSERFDISVVNNKSECESLMYTGQVRWMNVKVNYDNV) the chain is on the extracellular side. Cys-1183 and Cys-1203 are disulfide-bonded. N-linked (GlcNAc...) asparagine glycosylation is found at Asn-1185 and Asn-1199. An intramembrane region (pore-forming) is located at residues 1225–1246 (GLGYLSLLQVATFKGWMDIMYA). The Extracellular portion of the chain corresponds to 1247-1263 (AVDSREKEEQPDYEVNL). Residues 1264-1285 (YMYLYFVIFIIFGSFFTLNLFI) form a helical membrane-spanning segment. The Cytoplasmic portion of the chain corresponds to 1286-1348 (GVIIDNFNQQ…MVYDFVTKQV (63 aa)). The interval 1304–1306 (IFM) is important for rapid channel inactivation. The stretch at 1329-1627 (IPRPQNKIQG…WEKFDPDATQ (299 aa)) is one IV repeat. The chain crosses the membrane as a helical span at residues 1349-1366 (FDISIMILICLNMVTMMV). The Extracellular portion of the chain corresponds to 1367–1377 (ETDDQSQLKVD). Residues 1378–1396 (ILYNINMVFIIVFTGECVL) traverse the membrane as a helical segment. At 1397-1408 (KMFALRHYYFTI) the chain is on the cytoplasmic side. Residues 1409–1426 (GWNIFDFVVVILSIVGLA) traverse the membrane as a helical segment. Residues 1427–1439 (LSDLIQKYFVSPT) lie on the Extracellular side of the membrane. The chain crosses the membrane as a helical span at residues 1440-1456 (LFRVIRLARIGRVLRLI). The Cytoplasmic portion of the chain corresponds to 1457–1475 (RGAKGIRTLLFALMMSLPA). A helical membrane pass occupies residues 1476–1493 (LFNIGLLLFLVMFIYSIF). Topologically, residues 1494 to 1515 (GMSNFAYVKKESGIDDMFNFET) are extracellular. Residues 1516–1538 (FGNSIICLFEITTSAGWDGLLNP) constitute an intramembrane region (pore-forming). Over 1539-1568 (ILNSGPPDCDPTLENPGTNIKGDCGNPSIG) the chain is Extracellular. Cys-1547 and Cys-1562 form a disulfide bridge. The chain crosses the membrane as a helical span at residues 1569–1591 (ICFFCSYIIISFLIVVNMYIAII). At 1592-1841 (LENFNVATEE…VRPGVKESLV (250 aa)) the chain is on the cytoplasmic side. One can recognise an IQ domain in the interval 1721–1750 (EEVCAIKIQRAYRRHLLQRSVKQASYMYRH). Over residues 1776–1794 (SEKEDNGVQSQGEKEKDST) the composition is skewed to basic and acidic residues. A disordered region spans residues 1776–1841 (SEKEDNGVQS…VRPGVKESLV (66 aa)). The segment covering 1801–1812 (TEVTAPSSSDTA) has biased composition (polar residues). Residues 1814–1826 (TPPPPSPPPPSSP) show a composition bias toward pro residues.

It belongs to the sodium channel (TC 1.A.1.10) family. Nav1.4/SCN4A subfamily. As to quaternary structure, the Nav1.4 voltage-gated sodium channel consists of an ion-conducting alpha subunit SCN4A which is functional on its own and a regulatory beta subunit SCN1B. SCN1B strongly enhances the presence of SCN4A at the cell surface. SCN1B is also required for rapid channel inactivation and recovery after inactivation. It prevents the decrease of channel activity in response to repetitive, high-frequency depolarizations. Interacts with the syntrophins SNTA1, SNTB1 and SNTB2 (via PDZ domain); probably links SCN4A to the actin cytoskeleton and the extracellular matrix via the dystrophin-associated protein complex and regulates its localization in muscle cells. Interacts with TMEM233; probable regulator of the channel. Detected in quadriceps muscle (at protein level). Detected in hind-limb skeletal muscles, but not in heart or brain. Detected at low levels in the myocardium. According to Pubme=26427606 detected also in brain.

It localises to the cell membrane. The catalysed reaction is Na(+)(in) = Na(+)(out). Its activity is regulated as follows. The channel is inhibited by tetrodotoxin. In terms of biological role, pore-forming subunit of Nav1.4, a voltage-gated sodium (Nav) channel that directly mediates the depolarizing phase of action potentials in excitable membranes. Navs, also called VGSCs (voltage-gated sodium channels) or VDSCs (voltage-dependent sodium channels), operate by switching between closed and open conformations depending on the voltage difference across the membrane. In the open conformation they allow Na(+) ions to selectively pass through the pore, along their electrochemical gradient. The influx of Na+ ions provokes membrane depolarization, initiating the propagation of electrical signals throughout cells and tissues. Highly expressed in skeletal muscles, Nav1.4 generates the action potential crucial for muscle contraction. The protein is Sodium channel protein type 4 subunit alpha of Mus musculus (Mouse).